The following is a 456-amino-acid chain: Signal transduction histidine-protein kinase ArlS (456 aa).

2 helical membrane passes run 13–33 (LITT…IIFF) and 157–177 (IVAL…SYIF). The HAMP domain occupies 179-232 (SQITKPIVTMSNKMNQIRRDGFQNKLELTTNYEETDNLIDTFNEMMYQIEESFN). Residues 240-456 (DASHELRTPL…TFKISFPVLN (217 aa)) enclose the Histidine kinase domain. The residue at position 243 (His243) is a Phosphohistidine; by autocatalysis.

Autophosphorylated.

Its subcellular location is the cell membrane. It catalyses the reaction ATP + protein L-histidine = ADP + protein N-phospho-L-histidine.. Its function is as follows. Member of the two-component regulatory system ArlS/ArlR. ArlS probably functions as a sensor protein kinase which is autophosphorylated at a histidine residue and transfers its phosphate group to ArlR. This Staphylococcus epidermidis (strain ATCC 35984 / DSM 28319 / BCRC 17069 / CCUG 31568 / BM 3577 / RP62A) protein is Signal transduction histidine-protein kinase ArlS (arlS).